The primary structure comprises 565 residues: Proline--tRNA ligase (565 aa).

Belongs to the class-II aminoacyl-tRNA synthetase family. ProS type 1 subfamily. As to quaternary structure, homodimer.

Its subcellular location is the cytoplasm. It catalyses the reaction tRNA(Pro) + L-proline + ATP = L-prolyl-tRNA(Pro) + AMP + diphosphate. In terms of biological role, catalyzes the attachment of proline to tRNA(Pro) in a two-step reaction: proline is first activated by ATP to form Pro-AMP and then transferred to the acceptor end of tRNA(Pro). As ProRS can inadvertently accommodate and process non-cognate amino acids such as alanine and cysteine, to avoid such errors it has two additional distinct editing activities against alanine. One activity is designated as 'pretransfer' editing and involves the tRNA(Pro)-independent hydrolysis of activated Ala-AMP. The other activity is designated 'posttransfer' editing and involves deacylation of mischarged Ala-tRNA(Pro). The misacylated Cys-tRNA(Pro) is not edited by ProRS. The sequence is that of Proline--tRNA ligase from Francisella tularensis subsp. novicida (strain U112).